The following is a 557-amino-acid chain: Potassium-transporting ATPase potassium-binding subunit (557 aa).

Transmembrane regions (helical) follow at residues 5–25 (GFLL…PLGS), 63–83 (LCAI…MLLG), 132–152 (GLTV…FAFI), 170–190 (LLRI…LFLI), 253–273 (FVQM…FGEV), 283–303 (LLWA…WAEV), 329–349 (VLVS…AVIA), 356–376 (ALGG…FGGV), 379–399 (GLYG…LMIG), 416–436 (LTAL…ALAM), 484–504 (LLAF…MAIA), and 526–546 (LFVG…FIPA).

This sequence belongs to the KdpA family. In terms of assembly, the system is composed of three essential subunits: KdpA, KdpB and KdpC.

The protein localises to the cell inner membrane. Functionally, part of the high-affinity ATP-driven potassium transport (or Kdp) system, which catalyzes the hydrolysis of ATP coupled with the electrogenic transport of potassium into the cytoplasm. This subunit binds the periplasmic potassium ions and delivers the ions to the membrane domain of KdpB through an intramembrane tunnel. The sequence is that of Potassium-transporting ATPase potassium-binding subunit from Shigella boydii serotype 18 (strain CDC 3083-94 / BS512).